We begin with the raw amino-acid sequence, 642 residues long: Threonine--tRNA ligase (642 aa).

The TGS domain maps to 1-61; that stretch reads MPVITITNGL…MQDSKLDIIT (61 aa). The segment at 243–534 is catalytic; it reads DHRKIGQQLD…LIEEYAGFFP (292 aa). Cys-334, His-385, and His-511 together coordinate Zn(2+).

Belongs to the class-II aminoacyl-tRNA synthetase family. In terms of assembly, homodimer. Requires Zn(2+) as cofactor.

It is found in the cytoplasm. The catalysed reaction is tRNA(Thr) + L-threonine + ATP = L-threonyl-tRNA(Thr) + AMP + diphosphate + H(+). Its function is as follows. Catalyzes the attachment of threonine to tRNA(Thr) in a two-step reaction: L-threonine is first activated by ATP to form Thr-AMP and then transferred to the acceptor end of tRNA(Thr). Also edits incorrectly charged L-seryl-tRNA(Thr). The chain is Threonine--tRNA ligase from Baumannia cicadellinicola subsp. Homalodisca coagulata.